Here is a 130-residue protein sequence, read N- to C-terminus: Cytochrome b-c1 complex subunit 7 (130 aa).

Belongs to the UQCRB/QCR7 family. In terms of assembly, component of the ubiquinol-cytochrome c oxidoreductase (cytochrome b-c1 complex, complex III, CIII), a multisubunit enzyme composed of 3 respiratory subunits cytochrome b, cytochrome c1 and Rieske protein, 2 core protein subunits, and additional low-molecular weight protein subunits. The complex exists as an obligatory dimer and forms supercomplexes (SCs) in the inner mitochondrial membrane with cytochrome c oxidase (complex IV, CIV).

The protein localises to the mitochondrion inner membrane. Functionally, component of the ubiquinol-cytochrome c oxidoreductase, a multisubunit transmembrane complex that is part of the mitochondrial electron transport chain which drives oxidative phosphorylation. The respiratory chain contains 3 multisubunit complexes succinate dehydrogenase (complex II, CII), ubiquinol-cytochrome c oxidoreductase (cytochrome b-c1 complex, complex III, CIII) and cytochrome c oxidase (complex IV, CIV), that cooperate to transfer electrons derived from NADH and succinate to molecular oxygen, creating an electrochemical gradient over the inner membrane that drives transmembrane transport and the ATP synthase. The cytochrome b-c1 complex catalyzes electron transfer from ubiquinol to cytochrome c, linking this redox reaction to translocation of protons across the mitochondrial inner membrane, with protons being carried across the membrane as hydrogens on the quinol. In the process called Q cycle, 2 protons are consumed from the matrix, 4 protons are released into the intermembrane space and 2 electrons are passed to cytochrome c. This chain is Cytochrome b-c1 complex subunit 7, found in Schistosoma mansoni (Blood fluke).